The chain runs to 244 residues: tRNA (guanine-N(7)-)-methyltransferase (244 aa).

Pro residues predominate over residues methionine 1–leucine 11. Positions methionine 1 to arginine 23 are disordered. S-adenosyl-L-methionine-binding residues include glutamate 74, glutamate 99, aspartate 126, and aspartate 149. Residue aspartate 149 is part of the active site. Residues lysine 153, aspartate 185, and threonine 222 to glutamate 225 each bind substrate.

This sequence belongs to the class I-like SAM-binding methyltransferase superfamily. TrmB family.

The catalysed reaction is guanosine(46) in tRNA + S-adenosyl-L-methionine = N(7)-methylguanosine(46) in tRNA + S-adenosyl-L-homocysteine. Its pathway is tRNA modification; N(7)-methylguanine-tRNA biosynthesis. Functionally, catalyzes the formation of N(7)-methylguanine at position 46 (m7G46) in tRNA. In Pseudomonas syringae pv. tomato (strain ATCC BAA-871 / DC3000), this protein is tRNA (guanine-N(7)-)-methyltransferase.